We begin with the raw amino-acid sequence, 375 residues long: Patatin-1-Kuras 2 (375 aa).

The first 11 residues, 1–11, serve as a signal peptide directing secretion; that stretch reads MILATTSSTFA. Positions 20-218 constitute a PNPLA domain; it reads LSIDGGGIKG…TVADPALLSV (199 aa). Residues 24–29 carry the GXGXXG motif; sequence GGGIKG. Residues 63-67 carry the GXSXG motif; the sequence is GTSTG. Residue Ser-65 is the Nucleophile of the active site. Residue Asn-103 is glycosylated (N-linked (GlcNAc...) asparagine). Residue Asp-204 is the Proton acceptor of the active site. The DGA/G signature appears at 204–206; it reads DGA. Residues 349–373 adopt a coiled-coil conformation; sequence ETYEEALKRFAKLLSDRKKLRANKA.

It belongs to the patatin family. As to expression, tuber.

It is found in the vacuole. Probable lipolytic acyl hydrolase (LAH), an activity which is thought to be involved in the response of tubers to pathogens. This chain is Patatin-1-Kuras 2 (pat1-k2), found in Solanum tuberosum (Potato).